The following is a 335-amino-acid chain: Fructose-1,6-bisphosphatase class 1 (335 aa).

Mg(2+) contacts are provided by Glu-91, Asp-113, Leu-115, and Asp-116. Residues 116 to 119, Asn-208, and Lys-274 each bind substrate; that span reads DGSS. Glu-280 serves as a coordination point for Mg(2+).

The protein belongs to the FBPase class 1 family. As to quaternary structure, homotetramer. Mg(2+) serves as cofactor.

The protein resides in the cytoplasm. It carries out the reaction beta-D-fructose 1,6-bisphosphate + H2O = beta-D-fructose 6-phosphate + phosphate. It functions in the pathway carbohydrate biosynthesis; gluconeogenesis. This Chromobacterium violaceum (strain ATCC 12472 / DSM 30191 / JCM 1249 / CCUG 213 / NBRC 12614 / NCIMB 9131 / NCTC 9757 / MK) protein is Fructose-1,6-bisphosphatase class 1.